Consider the following 113-residue polypeptide: Ig heavy chain V region 36-60 (113 aa).

The sequence is that of Ig heavy chain V region 36-60 from Mus musculus (Mouse).